Here is a 434-residue protein sequence, read N- to C-terminus: 3-isopropylmalate dehydratase large subunit 1 (434 aa).

[4Fe-4S] cluster contacts are provided by C308, C368, and C371.

This sequence belongs to the aconitase/IPM isomerase family. LeuC type 2 subfamily. Heterodimer of LeuC and LeuD. [4Fe-4S] cluster is required as a cofactor.

It carries out the reaction (2R,3S)-3-isopropylmalate = (2S)-2-isopropylmalate. Its pathway is amino-acid biosynthesis; L-leucine biosynthesis; L-leucine from 3-methyl-2-oxobutanoate: step 2/4. In terms of biological role, catalyzes the isomerization between 2-isopropylmalate and 3-isopropylmalate, via the formation of 2-isopropylmaleate. In Deinococcus radiodurans (strain ATCC 13939 / DSM 20539 / JCM 16871 / CCUG 27074 / LMG 4051 / NBRC 15346 / NCIMB 9279 / VKM B-1422 / R1), this protein is 3-isopropylmalate dehydratase large subunit 1.